Reading from the N-terminus, the 151-residue chain is MNLWLLVCLVASLMGAWSTVHTQGVSEDCCLAYHHRARPRLLMRAQGYQRQEVSGSCNLPAVIFFFPKNKMLCVNPRVNWLPNVFKFLDNRNNTHSKQHLGSRRNLQDSHLGGQRSNTGMSRLAHSKSKSSRSTRSNKKKTSFLNMANPGP.

Positions 1 to 22 (MNLWLLVCLVASLMGAWSTVHT) are cleaved as a signal peptide. Intrachain disulfides connect C29-C57 and C30-C73. A disordered region spans residues 94–151 (THSKQHLGSRRNLQDSHLGGQRSNTGMSRLAHSKSKSSRSTRSNKKKTSFLNMANPGP). Residues 124 to 141 (AHSKSKSSRSTRSNKKKT) show a composition bias toward basic residues.

It belongs to the intercrine beta (chemokine CC) family.

The protein resides in the secreted. Potentially involved in T-cell development. Recombinant protein shows chemotactic activity on thymocytes, macrophages, THP-1 cells, and dendritics cells but is inactive on peripheral blood lymphocytes and neutrophils. Binds to CCR9. Binds to atypical chemokine receptor ACKR4 and mediates the recruitment of beta-arrestin (ARRB1/2) to ACKR4. In Canis lupus familiaris (Dog), this protein is C-C motif chemokine 25 (CCL25).